The sequence spans 595 residues: Methionine--tRNA ligase (595 aa).

Residues 11–21 carry the 'HIGH' region motif; that stretch reads PYANGPRHIGH. Zn(2+) contacts are provided by cysteine 143, cysteine 146, cysteine 156, and cysteine 159. A 'KMSKS' region motif is present at residues 350–354; sequence KFSSS. Serine 353 provides a ligand contact to ATP.

It belongs to the class-I aminoacyl-tRNA synthetase family. MetG type 1 subfamily. In terms of assembly, monomer. Requires Zn(2+) as cofactor.

Its subcellular location is the cytoplasm. The enzyme catalyses tRNA(Met) + L-methionine + ATP = L-methionyl-tRNA(Met) + AMP + diphosphate. Is required not only for elongation of protein synthesis but also for the initiation of all mRNA translation through initiator tRNA(fMet) aminoacylation. This chain is Methionine--tRNA ligase, found in Nocardioides sp. (strain ATCC BAA-499 / JS614).